Here is a 708-residue protein sequence, read N- to C-terminus: Protein MICRORCHIDIA 5 (708 aa).

The segment covering 1–11 has biased composition (polar residues); the sequence is MAESGSTNPKS. A disordered region spans residues 1–47; sequence MAESGSTNPKSPSVVPDSTLGGLKRDLRNYHDGDDSNNLSIKKSKTT. A compositionally biased stretch (basic and acidic residues) spans 23–34; that stretch reads LKRDLRNYHDGD. A coiled-coil region spans residues 590-665; sequence SVNLEAELQK…LENRQEGVST (76 aa). A Nuclear localization signal motif is present at residues 672–679; sequence ARRDVTED.

This sequence belongs to the MORC ATPase protein family. As to quaternary structure, homodimer and heterodimer. Component of an RNA-directed DNA methylation (RdDM) complex. Requires Mg(2+) as cofactor. Mn(2+) is required as a cofactor.

The protein localises to the nucleus. Functionally, exhibits ATPase activity. Binds DNA/RNA in a non-specific manner and exhibits endonuclease activity. Probably involved in DNA repair. Involved in RNA-directed DNA methylation (RdDM) as a component of the RdDM machinery and required for gene silencing. May also be involved in the regulation of chromatin architecture to maintain gene silencing. The polypeptide is Protein MICRORCHIDIA 5 (Arabidopsis thaliana (Mouse-ear cress)).